The primary structure comprises 325 residues: Ribosomal RNA small subunit methyltransferase H (325 aa).

Residues 1-28 (MTASQPLDQADQDSESSSAGSSAAETEH) are disordered. The span at 15 to 24 (ESSSAGSSAA) shows a compositional bias: low complexity. S-adenosyl-L-methionine contacts are provided by residues 56–58 (GGH), Asp82, Tyr110, Asp131, and Gln138. The tract at residues 303–325 (TDEEVQANPRSRSAKLRVAKRVE) is disordered. Over residues 314-325 (RSAKLRVAKRVE) the composition is skewed to basic residues.

Belongs to the methyltransferase superfamily. RsmH family.

The protein resides in the cytoplasm. It carries out the reaction cytidine(1402) in 16S rRNA + S-adenosyl-L-methionine = N(4)-methylcytidine(1402) in 16S rRNA + S-adenosyl-L-homocysteine + H(+). Functionally, specifically methylates the N4 position of cytidine in position 1402 (C1402) of 16S rRNA. The sequence is that of Ribosomal RNA small subunit methyltransferase H from Rhodopirellula baltica (strain DSM 10527 / NCIMB 13988 / SH1).